The primary structure comprises 128 residues: Ig kappa chain V-V region T1 (128 aa).

The signal sequence occupies residues 1 to 20 (MRTPAQFLGILLLWFPGIKC). Positions 21–43 (DIKMTQSPSSMYASLGERVTISC) are framework-1. C43 and C108 are joined by a disulfide. Residues 44-54 (KASQDINSYLT) form a complementarity-determining-1 region. The segment at 55–69 (WFQQKPGKSPKTLLY) is framework-2. Positions 70–76 (RANRLVD) are complementarity-determining-2. Residues 77 to 108 (GVPSRFSGSGSGQDFSLTISSLEYEDMGIYYC) are framework-3. Residues 109-117 (LQYDEFPLT) are complementarity-determining-3. A framework-4 region spans residues 118–127 (FGAGTKLELK).

The chain is Ig kappa chain V-V region T1 from Mus musculus (Mouse).